Here is a 222-residue protein sequence, read N- to C-terminus: Tetratricopeptide repeat protein 9A (222 aa).

Disordered stretches follow at residues 1-49 (MERK…AAAE) and 88-116 (KGLL…GRLS). One copy of the TPR 1 repeat lies at 56 to 89 (RAHEFKSQGAQCYKDKKFREAIGKYHRALLELKG). S105 bears the Phosphoserine mark. TPR repeat units follow at residues 125–160 (AIEI…LKKE) and 161–194 (GENF…RTQQ).

The protein belongs to the TTC9 family.

The protein is Tetratricopeptide repeat protein 9A (TTC9) of Homo sapiens (Human).